The following is a 523-amino-acid chain: Apoptosis inhibitor 5 (523 aa).

The segment at 1 to 360 (MPTVEELYRN…HQLGRKLPDF (360 aa)) is ARM-like and Heat-like helical repeats. The tract at residues 446–523 (VQKADANQKR…RGNRSRGRIY (78 aa)) is disordered. The short motif at 454-475 (KRTSEDTTSSSPPKKASAGPKR) is the Nuclear localization signal element. A compositionally biased stretch (low complexity) spans 460–471 (TTSSSPPKKASA). The segment covering 487 to 497 (KYSSNLGSFSY) has biased composition (polar residues). Gly residues predominate over residues 502-515 (GFRGGRGRGWGGRG).

This sequence belongs to the API5 family. Monomer.

It is found in the nucleus. Its subcellular location is the cytoplasm. Functionally, antiapoptotic factor that may have a role in protein assembly. This Gallus gallus (Chicken) protein is Apoptosis inhibitor 5 (API5).